The following is a 262-amino-acid chain: L-aspartate dehydrogenase (262 aa).

Residues Ala128 and Asn183 each contribute to the NAD(+) site. The active site involves His213.

It belongs to the L-aspartate dehydrogenase family.

The catalysed reaction is L-aspartate + NADP(+) + H2O = oxaloacetate + NH4(+) + NADPH + H(+). It catalyses the reaction L-aspartate + NAD(+) + H2O = oxaloacetate + NH4(+) + NADH + H(+). Its pathway is cofactor biosynthesis; NAD(+) biosynthesis; iminoaspartate from L-aspartate (dehydrogenase route): step 1/1. Functionally, specifically catalyzes the NAD or NADP-dependent dehydrogenation of L-aspartate to iminoaspartate. The sequence is that of L-aspartate dehydrogenase from Methanopyrus kandleri (strain AV19 / DSM 6324 / JCM 9639 / NBRC 100938).